The following is a 368-amino-acid chain: Flagellar P-ring protein 1 (368 aa).

The N-terminal stretch at 1 to 24 (MIFKQIRRLIAAALLAALSLPAAA) is a signal peptide.

The protein belongs to the FlgI family. In terms of assembly, the basal body constitutes a major portion of the flagellar organelle and consists of four rings (L,P,S, and M) mounted on a central rod.

It localises to the periplasm. The protein resides in the bacterial flagellum basal body. Functionally, assembles around the rod to form the L-ring and probably protects the motor/basal body from shearing forces during rotation. The sequence is that of Flagellar P-ring protein 1 from Chromobacterium violaceum (strain ATCC 12472 / DSM 30191 / JCM 1249 / CCUG 213 / NBRC 12614 / NCIMB 9131 / NCTC 9757 / MK).